The sequence spans 124 residues: Small ribosomal subunit protein uS12 (124 aa).

Asp-89 carries the post-translational modification 3-methylthioaspartic acid. The interval 104–124 (ATGVKDRKQGRSKYGAKRPKE) is disordered. The span at 113–124 (GRSKYGAKRPKE) shows a compositional bias: basic residues.

This sequence belongs to the universal ribosomal protein uS12 family. In terms of assembly, part of the 30S ribosomal subunit. Contacts proteins S8 and S17. May interact with IF1 in the 30S initiation complex.

Functionally, with S4 and S5 plays an important role in translational accuracy. Interacts with and stabilizes bases of the 16S rRNA that are involved in tRNA selection in the A site and with the mRNA backbone. Located at the interface of the 30S and 50S subunits, it traverses the body of the 30S subunit contacting proteins on the other side and probably holding the rRNA structure together. The combined cluster of proteins S8, S12 and S17 appears to hold together the shoulder and platform of the 30S subunit. The sequence is that of Small ribosomal subunit protein uS12 from Picosynechococcus sp. (strain ATCC 27264 / PCC 7002 / PR-6) (Agmenellum quadruplicatum).